The chain runs to 207 residues: Segregation and condensation protein B (207 aa).

This sequence belongs to the ScpB family. In terms of assembly, homodimer. Homodimerization may be required to stabilize the binding of ScpA to the Smc head domains. Component of a cohesin-like complex composed of ScpA, ScpB and the Smc homodimer, in which ScpA and ScpB bind to the head domain of Smc. The presence of the three proteins is required for the association of the complex with DNA.

The protein localises to the cytoplasm. In terms of biological role, participates in chromosomal partition during cell division. May act via the formation of a condensin-like complex containing Smc and ScpA that pull DNA away from mid-cell into both cell halves. The polypeptide is Segregation and condensation protein B (Mycoplasmopsis pulmonis (strain UAB CTIP) (Mycoplasma pulmonis)).